The chain runs to 263 residues: Regulatory protein RecX (263 aa).

This sequence belongs to the RecX family.

It is found in the cytoplasm. In terms of biological role, modulates RecA activity. The polypeptide is Regulatory protein RecX (Bacillus licheniformis (strain ATCC 14580 / DSM 13 / JCM 2505 / CCUG 7422 / NBRC 12200 / NCIMB 9375 / NCTC 10341 / NRRL NRS-1264 / Gibson 46)).